The primary structure comprises 149 residues: L-alanine exporter AlaE (149 aa).

4 consecutive transmembrane segments (helical) span residues 16-36 (FAMV…LSGM), 46-66 (LVAI…RDAI), 85-105 (VLAY…TVGA), and 112-132 (AAVS…GYFL).

Belongs to the AlaE exporter family.

It is found in the cell inner membrane. In terms of biological role, exports L-alanine. The protein is L-alanine exporter AlaE of Citrobacter koseri (strain ATCC BAA-895 / CDC 4225-83 / SGSC4696).